Consider the following 1205-residue polypeptide: Partitioning defective 3 homolog B (1205 aa).

Disordered regions lie at residues 83 to 104 (EPLHKIESPSGNPADRQSPDAF) and 137 to 165 (VRRSSDPVPGPPADTQPSASHPGGQSLKL). Serine 100 is modified (phosphoserine). In terms of domain architecture, PDZ 1 spans 201–289 (TRTVEISGEG…SPSVLLHVLP (89 aa)). Positions 318–374 (VPPPVHGKSGLKTANLTGTDSPETDASASLQQNKSPRVPRLGGKPSSPSLSPLMGFG) are disordered. Residues 329–352 (KTANLTGTDSPETDASASLQQNKS) show a composition bias toward polar residues. Residues serine 346, serine 352, and serine 368 each carry the phosphoserine modification. The segment covering 356-374 (PRLGGKPSSPSLSPLMGFG) has biased composition (low complexity). 2 PDZ domains span residues 383–468 (KIDL…VIAR) and 498–585 (EIPL…GMIQ). Residues serine 635, serine 710, serine 728, serine 730, serine 746, serine 749, and serine 801 each carry the phosphoserine modification. The tract at residues 707-743 (ASKSMDLVPDESKVHSLAGQKSESPSKDFGPTLGLKK) is disordered. Disordered regions lie at residues 784–921 (AIDK…KHQE) and 1111–1205 (PYYP…TAAV). Positions 806–822 (HSGQGALNCESAPQGNS) are enriched in polar residues. Basic and acidic residues-rich tracts occupy residues 838 to 865 (KEKEKKKEKGKLKVKEKKRKEENEDPER) and 881 to 921 (KKED…KHQE). Position 1184 is a phosphoserine (serine 1184).

This sequence belongs to the PAR3 family. Interacts with PARD6B. Interacts with INSC/inscuteable. As to expression, highly expressed in kidney, lung and skeletal muscle. Expressed at intermediate levels in brain, heart, placenta, liver and pancreas. Isoform 1 is predominant, while isoform 2 and isoform 3 are expressed at lower levels.

The protein localises to the endomembrane system. Its subcellular location is the cell junction. It is found in the tight junction. Putative adapter protein involved in asymmetrical cell division and cell polarization processes. May play a role in the formation of epithelial tight junctions. The chain is Partitioning defective 3 homolog B (PARD3B) from Homo sapiens (Human).